The following is a 147-amino-acid chain: Hemoglobin subunit beta (147 aa).

In terms of domain architecture, Globin spans 3 to 147 (HWTAEEKQLI…VAHALARKYH (145 aa)). 2 residues coordinate heme b: His-64 and His-93.

It belongs to the globin family. In terms of assembly, heterotetramer of 2 alpha (or alpha-D) and 2 beta chains. In terms of tissue distribution, red blood cells.

In terms of biological role, involved in oxygen transport from the lung to the various peripheral tissues. The beta chain is a component of adult hemoglobin A and D. The sequence is that of Hemoglobin subunit beta (HBB) from Gallus gallus (Chicken).